A 429-amino-acid polypeptide reads, in one-letter code: Glutamate-1-semialdehyde 2,1-aminomutase 2 (429 aa).

An N6-(pyridoxal phosphate)lysine modification is found at K268.

Belongs to the class-III pyridoxal-phosphate-dependent aminotransferase family. HemL subfamily. In terms of assembly, homodimer. It depends on pyridoxal 5'-phosphate as a cofactor.

Its subcellular location is the cytoplasm. It catalyses the reaction (S)-4-amino-5-oxopentanoate = 5-aminolevulinate. The protein operates within porphyrin-containing compound metabolism; protoporphyrin-IX biosynthesis; 5-aminolevulinate from L-glutamyl-tRNA(Glu): step 2/2. This Bacillus cereus (strain B4264) protein is Glutamate-1-semialdehyde 2,1-aminomutase 2.